Here is a 299-residue protein sequence, read N- to C-terminus: NAD kinase 1 (299 aa).

Asp-62 acts as the Proton acceptor in catalysis. Residues 62-63 (DG), Lys-67, 143-144 (ND), Lys-173, and Asp-175 contribute to the NAD(+) site.

It belongs to the NAD kinase family. A divalent metal cation serves as cofactor.

It localises to the cytoplasm. It catalyses the reaction NAD(+) + ATP = ADP + NADP(+) + H(+). Its function is as follows. Involved in the regulation of the intracellular balance of NAD and NADP, and is a key enzyme in the biosynthesis of NADP. Catalyzes specifically the phosphorylation on 2'-hydroxyl of the adenosine moiety of NAD to yield NADP. This Prochlorococcus marinus subsp. pastoris (strain CCMP1986 / NIES-2087 / MED4) protein is NAD kinase 1.